We begin with the raw amino-acid sequence, 498 residues long: Probable FAD-binding monooxygenase AlmA (498 aa).

Residues 4–24 (HIDILIVGAGISGIGIAAHLS) traverse the membrane as a helical segment. FAD contacts are provided by Ser15, Glu36, Asp56, Phe62, and Val104. An NADP(+)-binding site is contributed by 54 to 56 (RSD). NADP(+) is bound by residues 184–190 (SGATAIT), 208–209 (RS), and 292–293 (RL). Val395 contacts FAD.

It belongs to the FAD-binding monooxygenase family. FAD is required as a cofactor.

The protein localises to the cell membrane. It participates in hydrocarbon metabolism; alkane degradation. In terms of biological role, is able to catalyze the degradation of n-alkanes with C chain lengths of 32 and 36. Probably allows Acinetobacter baylyi strain ADP1 to grow on the long-chain n-alkane dotriacontane (C32H66) as a sole carbon source. In Acinetobacter baylyi (strain ATCC 33305 / BD413 / ADP1), this protein is Probable FAD-binding monooxygenase AlmA.